The primary structure comprises 151 residues: Deoxyuridine 5'-triphosphate nucleotidohydrolase (151 aa).

Substrate-binding positions include 70-72, asparagine 83, 87-89, and methionine 97; these read RSG and LID.

This sequence belongs to the dUTPase family. The cofactor is Mg(2+).

The catalysed reaction is dUTP + H2O = dUMP + diphosphate + H(+). The protein operates within pyrimidine metabolism; dUMP biosynthesis; dUMP from dCTP (dUTP route): step 2/2. In terms of biological role, this enzyme is involved in nucleotide metabolism: it produces dUMP, the immediate precursor of thymidine nucleotides and it decreases the intracellular concentration of dUTP so that uracil cannot be incorporated into DNA. This Histophilus somni (strain 129Pt) (Haemophilus somnus) protein is Deoxyuridine 5'-triphosphate nucleotidohydrolase.